Here is a 695-residue protein sequence, read N- to C-terminus: UvrABC system protein B (695 aa).

One can recognise a Helicase ATP-binding domain in the interval 31-414; that stretch reads EGIESGLSFQ…EIQRSGQIAE (384 aa). An ATP-binding site is contributed by 44-51; sequence GVTGSGKT. A Beta-hairpin motif is present at residues 97 to 120; it reads YYDYYQPEAYVPSRDLFIEKDSSI. Residues 435-601 form the Helicase C-terminal domain; that stretch reads QVDDLMSEVS…GVNKRIKDLI (167 aa). The UVR domain maps to 632 to 667; that stretch reads AKEIQRLEKSMLEAARNMEFEQAAQYRDEIKNLRSK.

The protein belongs to the UvrB family. Forms a heterotetramer with UvrA during the search for lesions. Interacts with UvrC in an incision complex.

It localises to the cytoplasm. Its function is as follows. The UvrABC repair system catalyzes the recognition and processing of DNA lesions. A damage recognition complex composed of 2 UvrA and 2 UvrB subunits scans DNA for abnormalities. Upon binding of the UvrA(2)B(2) complex to a putative damaged site, the DNA wraps around one UvrB monomer. DNA wrap is dependent on ATP binding by UvrB and probably causes local melting of the DNA helix, facilitating insertion of UvrB beta-hairpin between the DNA strands. Then UvrB probes one DNA strand for the presence of a lesion. If a lesion is found the UvrA subunits dissociate and the UvrB-DNA preincision complex is formed. This complex is subsequently bound by UvrC and the second UvrB is released. If no lesion is found, the DNA wraps around the other UvrB subunit that will check the other stand for damage. This is UvrABC system protein B from Nitrosomonas europaea (strain ATCC 19718 / CIP 103999 / KCTC 2705 / NBRC 14298).